A 478-amino-acid polypeptide reads, in one-letter code: Vitronectin (478 aa).

An N-terminal signal peptide occupies residues 1–19 (MAPLRPLLILALLAWVALA). Residues 20–63 (DQESCKGRCTEGFNVDKKCQCDELCSYYQSCCTDYTAECKPQVT) enclose the SMB domain. Cystine bridges form between C24/C28, C24/C40, C28/C58, C38/C40, C38/C51, C44/C50, and C51/C58. A Cell attachment site motif is present at residues 64–66 (RGD). Position 69 is a phosphothreonine; by CK2; in vitro (T69). Sulfotyrosine is present on Y75. Position 76 is a phosphothreonine; by CK2; in vitro (T76). A Sulfotyrosine modification is found at Y78. N86 carries N-linked (GlcNAc...) (complex) asparagine glycosylation. Residues 91–158 (EQVGGPSLTS…PPAEEELCSG (68 aa)) are disordered. Residues 97–112 (SLTSDLQAQSKGNPEQ) show a composition bias toward polar residues. 2 positions are modified to phosphoserine: S130 and S137. The span at 133 to 143 (EGIDSRPETLH) shows a compositional bias: basic and acidic residues. 3 Hemopexin repeats span residues 158 to 202 (GKPF…VWGI), 203 to 250 (EGPI…FDGI), and 251 to 305 (PDNV…FEHF). An N-linked (GlcNAc...) asparagine glycan is attached at N169. N-linked (GlcNAc...) (complex) asparagine glycosylation is present at N242. Y282 is modified (sulfotyrosine). C293 and C430 are disulfide-bonded. The residue at position 312 (S312) is a Phosphoserine. The heparin-binding stretch occupies residues 362 to 395 (RPSLAKKQRFRHRNRKGYRSQRGHSRGRNQNSRR). The interval 364–398 (SLAKKQRFRHRNRKGYRSQRGHSRGRNQNSRRPSR) is disordered. Residues 365–388 (LAKKQRFRHRNRKGYRSQRGHSRG) are compositionally biased toward basic residues. The residue at position 397 (S397) is a Phosphoserine; by PKA. Residues Y417 and Y420 each carry the sulfotyrosine modification. The Hemopexin 4 repeat unit spans residues 419-472 (DYRMDWLVPATCEPIQSVFFFSGDKYYRVNLRTRRVDTVDPPYPRSIAQYWLGC).

As to quaternary structure, exists in two forms: a single chain 75 kDa form (V75) and a clipped form composed of two chains (65 kDa and 10 kDa) (V65+V10) which are held together by a disulfide bond. Interacts with SERPINE1/PAI1, insulin and C1QBP. (Microbial infection) Interacts (via hemopexin repeat 2) with P.falciparum (isolate CDC / Honduras) SERA5 P47 (via C-terminus); may form heterotetramers of two VTN and SERA5 P47 heterodimers; the interaction may protect merozoites from phagocytosis by host monocytes; VTN glycosylation appears to be dispensable for the interaction. Post-translationally, sulfated on tyrosine residues. In terms of processing, N- and O-glycosylated. Phosphorylation on Thr-69 and Thr-76 favors cell adhesion and spreading. Post-translationally, it has been suggested that the active SMB domain may be permitted considerable disulfide bond heterogeneity or variability, thus two alternate disulfide patterns based on 3D structures are described with 1 disulfide bond conserved in both. In terms of processing, phosphorylation sites are present in the extracellular medium. As to expression, expressed in the retina pigment epithelium (at protein level). Expressed in plasma (at protein level). Expressed in serum (at protein level).

The protein localises to the secreted. It localises to the extracellular space. The protein resides in the parasitophorous vacuole. Vitronectin is a cell adhesion and spreading factor found in serum and tissues. Vitronectin interact with glycosaminoglycans and proteoglycans. Is recognized by certain members of the integrin family and serves as a cell-to-substrate adhesion molecule. Inhibitor of the membrane-damaging effect of the terminal cytolytic complement pathway. In terms of biological role, somatomedin-B is a growth hormone-dependent serum factor with protease-inhibiting activity. The polypeptide is Vitronectin (VTN) (Homo sapiens (Human)).